Reading from the N-terminus, the 211-residue chain is Transcription antitermination protein NusB (211 aa).

It belongs to the NusB family.

Involved in transcription antitermination. Required for transcription of ribosomal RNA (rRNA) genes. Binds specifically to the boxA antiterminator sequence of the ribosomal RNA (rrn) operons. The sequence is that of Transcription antitermination protein NusB from Gloeobacter violaceus (strain ATCC 29082 / PCC 7421).